A 442-amino-acid chain; its full sequence is tRNA(Ile)-lysidine synthase (442 aa).

Position 28–33 (28–33 (SGGLDS)) interacts with ATP.

This sequence belongs to the tRNA(Ile)-lysidine synthase family.

The protein resides in the cytoplasm. It carries out the reaction cytidine(34) in tRNA(Ile2) + L-lysine + ATP = lysidine(34) in tRNA(Ile2) + AMP + diphosphate + H(+). In terms of biological role, ligates lysine onto the cytidine present at position 34 of the AUA codon-specific tRNA(Ile) that contains the anticodon CAU, in an ATP-dependent manner. Cytidine is converted to lysidine, thus changing the amino acid specificity of the tRNA from methionine to isoleucine. The polypeptide is tRNA(Ile)-lysidine synthase (Pseudomonas aeruginosa (strain ATCC 15692 / DSM 22644 / CIP 104116 / JCM 14847 / LMG 12228 / 1C / PRS 101 / PAO1)).